We begin with the raw amino-acid sequence, 979 residues long: Protein argonaute PNH1 (979 aa).

A disordered region spans residues 1–95 (MLEVLDMAPP…GGRAGAGPGP (95 aa)). A compositionally biased stretch (low complexity) spans 54 to 67 (AETAAATAAVAPPE). Residues 77-86 (GRRRGGRGRG) show a composition bias toward basic residues. The PAZ domain occupies 333–446 (PVIEFVAQIL…LPMEACKIVE (114 aa)). A Piwi domain is found at 620-941 (LLLAILPDNN…AAFRARFYME (322 aa)).

This sequence belongs to the argonaute family. Ago subfamily.

It localises to the cytoplasm. Probably involved in the RNA silencing pathway. May bind to short RNAs such as microRNAs (miRNAs) or short interfering RNAs (siRNAs), and represses the translation of mRNAs which are complementary to them. Plays a role in the maintenance of the indeterminate state of the stem cells in the shoot apical meristem (SAM). Regulates leaf formation through vascular development and may be involved in determining the central domain of the leaf founder region. The polypeptide is Protein argonaute PNH1 (PHN1) (Oryza sativa subsp. japonica (Rice)).